Reading from the N-terminus, the 505-residue chain is MSEQNAQGADEVVDLNNEMKARREKLAALREQGIPFPNDFRRDRTSDQLHAEFDAKEAEELEALNIEVSVAGRMMTRRIMGKASFVTLQDVGGRIQLYVARDDLPEGVYNEQFKKWDLGDILGAKGKLFKTKTGELSIHCTELRLLTKALRPLPDKFHGLQDQEARYRQRYLDLISNDESRNTFKTRSKILAGIRQFMVARGFMEVETPMMQVIPGGASARPFITHHNALDLDMYLRIAPELYLKRLVVGGFERVFEINRNFRNEGISVRHNPEFTMMELYMAYADYKDLIELTESLFRTLAQDVLGTTQVPYGDEVFDFGKPFEKLTMHEAIKKYRPETDMADLDNFDSAKAIAESIGIHVEKSWGLGRIVTEIFDEVAEAHLIQPTFITEYPAEVSPLARRNDVNPEITDRFEFFIGGREIGNGFSELNDAEDQAQRFLDQVNAKAAGDDEAMFYDEDYVTALEHGLPPTAGLGIGIDRMVMLFTNSHTIRDVILFPAMRPVK.

Glutamate 415 and glutamate 422 together coordinate Mg(2+).

The protein belongs to the class-II aminoacyl-tRNA synthetase family. As to quaternary structure, homodimer. Requires Mg(2+) as cofactor.

The protein resides in the cytoplasm. The enzyme catalyses tRNA(Lys) + L-lysine + ATP = L-lysyl-tRNA(Lys) + AMP + diphosphate. This is Lysine--tRNA ligase from Salmonella typhi.